A 149-amino-acid chain; its full sequence is Cytochrome c-type biogenesis protein CcmE (149 aa).

Residues 1 to 7 (MTRKQKR) are Cytoplasmic-facing. The chain crosses the membrane as a helical; Signal-anchor for type II membrane protein span at residues 8–28 (LAVIAGGMGFIATAVLLVLFA). At 29 to 149 (FSQSVAYFYM…GVWKGEEASQ (121 aa)) the chain is on the periplasmic side. H123 and Y127 together coordinate heme.

Belongs to the CcmE/CycJ family.

It is found in the cell inner membrane. Its function is as follows. Heme chaperone required for the biogenesis of c-type cytochromes. Transiently binds heme delivered by CcmC and transfers the heme to apo-cytochromes in a process facilitated by CcmF and CcmH. This Rhizobium rhizogenes (strain K84 / ATCC BAA-868) (Agrobacterium radiobacter) protein is Cytochrome c-type biogenesis protein CcmE.